Reading from the N-terminus, the 318-residue chain is Porphobilinogen deaminase (318 aa).

At Cys245 the chain carries S-(dipyrrolylmethanemethyl)cysteine.

This sequence belongs to the HMBS family. As to quaternary structure, monomer. Requires dipyrromethane as cofactor.

It carries out the reaction 4 porphobilinogen + H2O = hydroxymethylbilane + 4 NH4(+). Its pathway is porphyrin-containing compound metabolism; protoporphyrin-IX biosynthesis; coproporphyrinogen-III from 5-aminolevulinate: step 2/4. It participates in porphyrin-containing compound metabolism; chlorophyll biosynthesis. Tetrapolymerization of the monopyrrole PBG into the hydroxymethylbilane pre-uroporphyrinogen in several discrete steps. The sequence is that of Porphobilinogen deaminase from Prochlorococcus marinus (strain MIT 9215).